The following is a 176-amino-acid chain: Peptide deformylase (176 aa).

Cys94 and His136 together coordinate Fe cation. The active site involves Glu137. Fe cation is bound at residue His140.

The protein belongs to the polypeptide deformylase family. Requires Fe(2+) as cofactor.

The enzyme catalyses N-terminal N-formyl-L-methionyl-[peptide] + H2O = N-terminal L-methionyl-[peptide] + formate. In terms of biological role, removes the formyl group from the N-terminal Met of newly synthesized proteins. Requires at least a dipeptide for an efficient rate of reaction. N-terminal L-methionine is a prerequisite for activity but the enzyme has broad specificity at other positions. This Mesorhizobium japonicum (strain LMG 29417 / CECT 9101 / MAFF 303099) (Mesorhizobium loti (strain MAFF 303099)) protein is Peptide deformylase.